Reading from the N-terminus, the 160-residue chain is MKTKMITREGYNKLKQELDYLWKEHRPEITQKVSWAASLGDRSENADYTYNKRLLRQIDRRVRFLSKFLPEVKIVDYAPQQEGKVFFGAWVEIENEAGEVMKFRIVGPEEIYGDAKGYISIDSPMARALLKKEVDDEVQVPTPSGIKEWFINSIEYDKGE.

The protein belongs to the GreA/GreB family. GreB subfamily.

Necessary for efficient RNA polymerase transcription elongation past template-encoded arresting sites. The arresting sites in DNA have the property of trapping a certain fraction of elongating RNA polymerases that pass through, resulting in locked ternary complexes. Cleavage of the nascent transcript by cleavage factors such as GreA or GreB allows the resumption of elongation from the new 3'terminus. GreB releases sequences of up to 9 nucleotides in length. This is Transcription elongation factor GreB from Vibrio vulnificus (strain CMCP6).